A 352-amino-acid polypeptide reads, in one-letter code: NAD(P)H pyrophosphatase NUDT13, mitochondrial (352 aa).

The N-terminal 20 residues, 1 to 20 (MSLYCGIACRRKFFWCYRLL), are a transit peptide targeting the mitochondrion. The Nudix hydrolase domain occupies 196–323 (PQMAPVAITL…PYTQQQNGTF (128 aa)). The Nudix box motif lies at 216–240 (RQSSFPKGMYSALAGFCDIGESVEE).

The protein belongs to the Nudix hydrolase family. Requires Mg(2+) as cofactor. It depends on Mn(2+) as a cofactor. Highly expressed in metastasis-suppressed chromosome 6 melanoma hybrids.

Its subcellular location is the mitochondrion. The enzyme catalyses NADH + H2O = reduced beta-nicotinamide D-ribonucleotide + AMP + 2 H(+). It catalyses the reaction NAD(+) + H2O = beta-nicotinamide D-ribonucleotide + AMP + 2 H(+). The catalysed reaction is NADPH + H2O = reduced beta-nicotinamide D-ribonucleotide + adenosine 2',5'-bisphosphate + 2 H(+). Functionally, NAD(P)H pyrophosphatase that hydrolyzes NADH into NMNH and AMP, and NADPH into NMNH and 2',5'-ADP. Has a marked preference for the reduced pyridine nucleotides. Does not show activity toward NAD-capped RNAs; the NAD-cap is an atypical cap present at the 5'-end of some RNAs. The polypeptide is NAD(P)H pyrophosphatase NUDT13, mitochondrial (Homo sapiens (Human)).